The following is a 265-amino-acid chain: AHGGVYAHPGVPIGSHPPGHGMATSPAVSQAMDGASLSLDASAKSSENSDRGLLAMSLGNGSADNIEGGADHGNSQSGDTEDSTDGSDTNGAGVSERSKKRSRETTPDNSGDSKSHLRRCQPTGEINDDSEKAIVAVRPGKVGEKVMGTVLSPSMTTTLEMRNPASTHLKASPTNVSQLSPALPNEAWLQNERELKREKRKQSNRESARRSRLRKQAEAEELAIRVQSLTAENMTLKSEINKLMENSEKLKLENAALMERLKMNS.

Disordered regions lie at residues 1–133 (AHGG…SEKA) and 167–218 (THLK…KQAE). The span at 35-46 (ASLSLDASAKSS) shows a compositional bias: low complexity. Basic and acidic residues-rich tracts occupy residues 103-115 (RETT…DSKS) and 191-209 (NERE…ESAR). In terms of domain architecture, bZIP spans 194 to 257 (ELKREKRKQS…EKLKLENAAL (64 aa)). Residues 196–215 (KREKRKQSNRESARRSRLRK) are basic motif. The tract at residues 222–257 (LAIRVQSLTAENMTLKSEINKLMENSEKLKLENAAL) is leucine-zipper.

It belongs to the bZIP family. In terms of tissue distribution, present mainly in roots. Barely detectable in stems and leaves.

The protein resides in the nucleus. Functionally, trans-activator of a beta-glucuronidase (GUS) reporter gene. Binds to a G-box-related element, (5'-GCAACGTGGC-3'). Also binds to the HEX-motif of wheat histone H3 promoter. In Nicotiana tabacum (Common tobacco), this protein is Transcriptional activator TAF-1 (TAF1).